A 38-amino-acid chain; its full sequence is Photosystem II reaction center protein L (38 aa).

Residues 17–37 form a helical membrane-spanning segment; sequence SLFWGLLLIFVLAVLFSSYFF.

Belongs to the PsbL family. PSII is composed of 1 copy each of membrane proteins PsbA, PsbB, PsbC, PsbD, PsbE, PsbF, PsbH, PsbI, PsbJ, PsbK, PsbL, PsbM, PsbT, PsbX, PsbY, PsbZ, Psb30/Ycf12, at least 3 peripheral proteins of the oxygen-evolving complex and a large number of cofactors. It forms dimeric complexes.

The protein localises to the plastid. It is found in the chloroplast thylakoid membrane. One of the components of the core complex of photosystem II (PSII). PSII is a light-driven water:plastoquinone oxidoreductase that uses light energy to abstract electrons from H(2)O, generating O(2) and a proton gradient subsequently used for ATP formation. It consists of a core antenna complex that captures photons, and an electron transfer chain that converts photonic excitation into a charge separation. This subunit is found at the monomer-monomer interface and is required for correct PSII assembly and/or dimerization. The sequence is that of Photosystem II reaction center protein L from Zygnema circumcarinatum (Green alga).